We begin with the raw amino-acid sequence, 339 residues long: Deoxyhypusine hydroxylase (339 aa).

HEAT-like PBS-type repeat units lie at residues 71 to 97 and 104 to 130; these read LKHELAYCLGQTRNPDAVSYLLEVVKN and CRHEAAEGLGALGFDTSLDVLKALRDD. 4 residues coordinate Fe cation: histidine 73, glutamate 74, histidine 106, and glutamate 107. The disordered stretch occupies residues 159–183; that stretch reads EKLKPSDFTSIDPAPPLPMASSQPS. HEAT-like PBS-type repeat units follow at residues 200–233, 238–264, and 271–298; these read QRYRAMFALRDLASPPDLPTAVEAVEALAKGLKD, FRHEVAFVFGQLCHPASVPSLTETLSD, and VRHEAAEALGSLGDVEGVEDTLKKFLND. Residues histidine 240, glutamate 241, histidine 273, and glutamate 274 each contribute to the Fe cation site.

It belongs to the deoxyhypusine hydroxylase family. Fe(2+) serves as cofactor.

The protein resides in the cytoplasm. Its subcellular location is the nucleus. The catalysed reaction is [eIF5A protein]-deoxyhypusine + AH2 + O2 = [eIF5A protein]-hypusine + A + H2O. Its pathway is protein modification; eIF5A hypusination. Its function is as follows. Catalyzes the hydroxylation of the N(6)-(4-aminobutyl)-L-lysine intermediate to form hypusine, an essential post-translational modification only found in mature eIF-5A factor. This is Deoxyhypusine hydroxylase (lia1) from Aspergillus oryzae (strain ATCC 42149 / RIB 40) (Yellow koji mold).